Here is a 588-residue protein sequence, read N- to C-terminus: Pectinesterase 4 (588 aa).

The N-terminal stretch at Met1 to Ala24 is a signal peptide. 3 N-linked (GlcNAc...) asparagine glycosylation sites follow: Asn86, Asn206, and Asn342. Residues Thr353 and Gln383 each coordinate substrate. Catalysis depends on Asp406, which acts as the Proton donor. Asp427 (nucleophile) is an active-site residue. 2 residues coordinate substrate: Arg496 and Trp498.

This sequence in the N-terminal section; belongs to the PMEI family. In the C-terminal section; belongs to the pectinesterase family. In terms of tissue distribution, expressed in pollen grains and pollen tubes.

Its subcellular location is the secreted. It is found in the cell wall. It catalyses the reaction [(1-&gt;4)-alpha-D-galacturonosyl methyl ester](n) + n H2O = [(1-&gt;4)-alpha-D-galacturonosyl](n) + n methanol + n H(+). It functions in the pathway glycan metabolism; pectin degradation; 2-dehydro-3-deoxy-D-gluconate from pectin: step 1/5. Its function is as follows. Acts in the modification of cell walls via demethylesterification of cell wall pectin. Plays an important role in growth of pollen tubes in female floral tissues, possibly via enhancing the interaction between the pollen tube and female floral tissues by modification of the cell walls. The sequence is that of Pectinesterase 4 (PME4) from Arabidopsis thaliana (Mouse-ear cress).